Here is a 535-residue protein sequence, read N- to C-terminus: Heat shock factor protein 2 (535 aa).

Residues Lys2, Lys82, Lys135, Lys139, Lys151, Lys210, Lys218, and Lys237 each participate in a glycyl lysine isopeptide (Lys-Gly) (interchain with G-Cter in SUMO2) cross-link. Residues 7–112 (VPAFLSKLWT…LLENIKRKVS (106 aa)) mediate DNA binding. Positions 119–192 (NKIRQEDLTK…VTLVQNNQLV (74 aa)) are hydrophobic repeat HR-A/B. Positions 298 to 325 (QSGEQSEPAREPLRVGSAGSSSPLMSSA) are disordered. Residues 313–325 (GSAGSSSPLMSSA) are compositionally biased toward low complexity. The interval 359–384 (LLDYLDSIDCSLEDFQAMLSGRQFSI) is hydrophobic repeat HR-C. Positions 418 to 437 (TKSSVVQHVSEEGRKSKSKP) are disordered. The segment covering 426–437 (VSEEGRKSKSKP) has biased composition (basic and acidic residues).

This sequence belongs to the HSF family. As to quaternary structure, DNA-binding homotrimer in stressed or heat shocked cells, otherwise found as a homodimer. As to expression, isoform alpha is expressed predominantly in testis while isoform beta is expressed predominantly in heart and brain.

It is found in the cytoplasm. The protein resides in the nucleus. Functionally, DNA-binding protein that specifically binds heat shock promoter elements (HSE) and activates transcription. In higher eukaryotes, HSF is unable to bind to the HSE unless the cells are heat shocked. HSF2 is expressed in a form that binds DNA constitutively but loses DNA binding by incubation at greater than 41 degrees C. This is Heat shock factor protein 2 (Hsf2) from Mus musculus (Mouse).